Here is a 335-residue protein sequence, read N- to C-terminus: Methyltransferase pgmE (335 aa).

Belongs to the methyltransferase superfamily.

Its pathway is pigment biosynthesis. It participates in secondary metabolite biosynthesis. Methyltransferase; part of the gene cluster that mediates the biosynthesis of pleosporalin A, ascomycone A, as well as a third cryptic naphthoquinone derived pigment, all responsible for the coloration of conidia. Essential for the production of pleosporalin A, but not the 2 other final products. The pathway begins with the biosynthesis of the cyclized heptaketide 3-acetonyl-1,6,8-trihydroxy-2-naphthaldehyde by the NR-PKS pgmA. The C-6 hydroxyl group is further methylated by the O-methyltransferase pgmB to yield fusarubinaldehyde which is in turn oxidized by the cytochrome P450 monooxygenase pgmC at C-9. The C-1 hydroxyl group is then methylated spontaneously. Although pgmE, pgmD and pgmH are essential for the production of pleosporalin A, it is not the case for the 2 other final products and it remains difficult to assign a specific function to each enzyme. PgmF and pgmG seem not to be involved in pigment biosynthesis although they were regulated by the cluster-specific transcription factor pgmR. The polypeptide is Methyltransferase pgmE (Aspergillus terreus (strain NIH 2624 / FGSC A1156)).